The sequence spans 296 residues: GTPase Era (296 aa).

The 168-residue stretch at 7–174 (RTGFVAVVGR…LDEIAARLPE (168 aa)) folds into the Era-type G domain. Residues 15-22 (GRPNVGKS) are G1. 15–22 (GRPNVGKS) lines the GTP pocket. Residues 41-45 (QTTRH) form a G2 region. A G3 region spans residues 62-65 (DTPG). GTP-binding positions include 62-66 (DTPGF) and 123-126 (SKID). The interval 123–126 (SKID) is G4. Residues 153-155 (VSA) form a G5 region. One can recognise a KH type-2 domain in the interval 205–281 (VGDELPYGCT…HLEVYIKVRK (77 aa)).

Belongs to the TRAFAC class TrmE-Era-EngA-EngB-Septin-like GTPase superfamily. Era GTPase family. Monomer.

It localises to the cytoplasm. It is found in the cell inner membrane. Functionally, an essential GTPase that binds both GDP and GTP, with rapid nucleotide exchange. Plays a role in 16S rRNA processing and 30S ribosomal subunit biogenesis and possibly also in cell cycle regulation and energy metabolism. The sequence is that of GTPase Era from Bordetella petrii (strain ATCC BAA-461 / DSM 12804 / CCUG 43448).